The sequence spans 54 residues: Hydrophobic protein RCI2B (54 aa).

The next 2 helical transmembrane spans lie at 2–22 and 32–52; these read STAT…GVFL and ICLI…LYII.

The protein belongs to the UPF0057 (PMP3) family.

Its subcellular location is the membrane. In Arabidopsis thaliana (Mouse-ear cress), this protein is Hydrophobic protein RCI2B (RCI2B).